A 365-amino-acid polypeptide reads, in one-letter code: Zinc transporter 7 (365 aa).

An N-terminal signal peptide occupies residues 1–26; it reads MAYSKACYKLTTITILLLSFTLPSLA. Topologically, residues 27–56 are extracellular; sequence GNAENADVSECKAESGDLSCHNNKEAQKLK. A helical transmembrane segment spans residues 57–77; it reads IIAIPSILVASMIGVSLPLFS. Over 78–90 the chain is Cytoplasmic; it reads RSIPALGPDREMS. Residues 91 to 111 form a helical membrane-spanning segment; the sequence is VIVKTLASGVILATGFMHVLP. Topologically, residues 112-129 are extracellular; that stretch reads DSFDDLTSKCLPEDPWQK. A helical transmembrane segment spans residues 130 to 150; that stretch reads FPFATFITMISALLVLMIESF. Residues 151–210 are Cytoplasmic-facing; the sequence is AMCAYARRTSKREGEVVPLENGSNSVDTQNDIQTLENGSSYVEKQEKVNEDKTSELLRNK. The chain crosses the membrane as a helical span at residues 211 to 231; sequence VIAQILELGIVVHSVVIGLAM. Topologically, residues 232–242 are extracellular; it reads GASDNKCTVQS. Residues 243-263 form a helical membrane-spanning segment; the sequence is LIAALCFHQLFEGMGLGGSIL. Residues 264–272 are Cytoplasmic-facing; that stretch reads QAQFKSKTN. A helical membrane pass occupies residues 273-293; it reads WTMVFFFSVTTPFGIVLGMAI. Residues 294 to 304 lie on the Extracellular side of the membrane; it reads QKIYDETSPTA. The helical transmembrane segment at 305–325 threads the bilayer; that stretch reads LIVVGVLNACSAGLLIYMALV. The Cytoplasmic segment spans residues 326–344; the sequence is NLLAHEFFGPKIQGNIKLH. Residues 345–365 traverse the membrane as a helical segment; sequence VLGYVATFTGAAGMSLMAKWA.

It belongs to the ZIP transporter (TC 2.A.5) family.

The protein localises to the cell membrane. Its function is as follows. Probably mediates zinc uptake from the rhizosphere. This Arabidopsis thaliana (Mouse-ear cress) protein is Zinc transporter 7 (ZIP7).